Here is a 388-residue protein sequence, read N- to C-terminus: Sulfate adenylyltransferase (388 aa).

This sequence belongs to the sulfate adenylyltransferase family.

It catalyses the reaction sulfate + ATP + H(+) = adenosine 5'-phosphosulfate + diphosphate. It participates in sulfur metabolism; hydrogen sulfide biosynthesis; sulfite from sulfate: step 1/3. The protein is Sulfate adenylyltransferase of Acaryochloris marina (strain MBIC 11017).